A 416-amino-acid polypeptide reads, in one-letter code: Actin-like protein 9 (416 aa).

A disordered region spans residues 1–23; sequence MDPNQGNPLEPQDSPEIPKPSLN.

The protein belongs to the actin family. In terms of assembly, interacts with ACTL7A.

Its subcellular location is the cytoplasmic vesicle. It localises to the secretory vesicle. It is found in the acrosome. The protein localises to the cytoplasm. The protein resides in the cytoskeleton. Its subcellular location is the perinuclear theca. Testis-specic protein that plays an important role in fusion of proacrosomal vesicles and perinuclear theca formation. In Bos taurus (Bovine), this protein is Actin-like protein 9 (ACTL9).